Reading from the N-terminus, the 420-residue chain is Gamma-glutamyl phosphate reductase (420 aa).

It belongs to the gamma-glutamyl phosphate reductase family.

The protein resides in the cytoplasm. The enzyme catalyses L-glutamate 5-semialdehyde + phosphate + NADP(+) = L-glutamyl 5-phosphate + NADPH + H(+). It functions in the pathway amino-acid biosynthesis; L-proline biosynthesis; L-glutamate 5-semialdehyde from L-glutamate: step 2/2. Functionally, catalyzes the NADPH-dependent reduction of L-glutamate 5-phosphate into L-glutamate 5-semialdehyde and phosphate. The product spontaneously undergoes cyclization to form 1-pyrroline-5-carboxylate. The polypeptide is Gamma-glutamyl phosphate reductase (Chlorobium luteolum (strain DSM 273 / BCRC 81028 / 2530) (Pelodictyon luteolum)).